The sequence spans 195 residues: Cbp/p300-interacting transactivator 1 (195 aa).

Disordered regions lie at residues methionine 1–proline 24 and alanine 51–isoleucine 149. Residues glycine 54–proline 78 show a composition bias toward low complexity. Polar residues predominate over residues methionine 97–tyrosine 106. A compositionally biased stretch (low complexity) spans serine 137–alanine 148. The Nuclear export signal motif lies at leucine 160–leucine 169.

Belongs to the CITED family. As to quaternary structure, interacts (via C-terminus) with CREBBP. Interacts with EGR2. Homodimer. Binds to RBM14. Interacts (via N-terminus) with HSPA8; the interaction suppresses the association of CITED1 with p300/CBP and SMAD-mediated transcription transactivation. Interacts (via C-terminus) with TOX3 (via HGM box); the interaction increases estrogen-response element (ERE)-dependent transcription and protection against cell death. Interacts with ESR1; the interaction occurs in a estrogen-dependent manner. Interacts (unphosphorylated form preferentially and via C-terminus) with EP300. Phosphorylated. Phosphorylation changes in a cell cycle-dependent manner and reduces its transcriptional cofactor activity.

It localises to the nucleus. The protein resides in the cytoplasm. Transcriptional coactivator of the p300/CBP-mediated transcription complex. Enhances SMAD-mediated transcription by strengthening the functional link between the DNA-binding SMAD transcription factors and the p300/CBP transcription coactivator complex. Stimulates estrogen-dependent transactivation activity mediated by estrogen receptors signaling; stabilizes the interaction of estrogen receptor ESR1 and histone acetyltransferase EP300. Positively regulates TGF-beta signaling through its association with the SMAD/p300/CBP-mediated transcriptional coactivator complex. Induces transcription from estrogen-responsive promoters and protection against cell death. Potentiates EGR2-mediated transcriptional activation activity from the ERBB2 promoter. Acts as an inhibitor of osteoblastic mineralization through a cAMP-dependent parathyroid hormone receptor signaling. May play a role in pigmentation of melanocytes. Associates with chromatin to the estrogen-responsive TGF-alpha promoter region in a estrogen-dependent manner. In Bos taurus (Bovine), this protein is Cbp/p300-interacting transactivator 1 (CITED1).